We begin with the raw amino-acid sequence, 426 residues long: Glutamate-1-semialdehyde 2,1-aminomutase (426 aa).

K265 carries the post-translational modification N6-(pyridoxal phosphate)lysine.

It belongs to the class-III pyridoxal-phosphate-dependent aminotransferase family. HemL subfamily. As to quaternary structure, homodimer. Requires pyridoxal 5'-phosphate as cofactor.

The protein resides in the cytoplasm. The catalysed reaction is (S)-4-amino-5-oxopentanoate = 5-aminolevulinate. The protein operates within porphyrin-containing compound metabolism; protoporphyrin-IX biosynthesis; 5-aminolevulinate from L-glutamyl-tRNA(Glu): step 2/2. In Neisseria gonorrhoeae (strain NCCP11945), this protein is Glutamate-1-semialdehyde 2,1-aminomutase.